The following is a 726-amino-acid chain: MDTFITRNFQTTIIQKAKNTMAEFSEDPELQPAMLFNICVHLEVCYVISDMNFLDEEGKTYTALEGQGKEQNLRPQYEVIEGMPRNIAWMVQRSLAQEHGIETPRYLADLFDYKTKRFIEVGITKGLADDYFWKKKEKLGNSMELMIFSYNQDYSLSNESSLDEEGKGRVLSRLTELQAELSLKNLWQVLIGEEDIEKGIDFKLGQTISKLRDISVPAGFSNFEGMRSYIDNIDPKGAIERNLARMSPLVSVTPKKLKWEDLRPIGPHIYNHELPEVPYNAFLLMSDELGLANMTEGKSKKPKTLAKECLEKYSTLRDQTDPILIMKSEKANENFLWKLWRDCVNTISNEETSNELQKTNYAKWATGDGLTYQKIMKEVAIDDETMYQEEPKIPNKCRVAAWVQTEMNLLSTLTSKRALDLPEIGPDVAPMEHVGSERRKYFVNEINYCKASTVMMKYVLFHTSLLNESNASMGKYKVIPITNRVVNEKGESFDMLHGLAVKGQSHLRGDTDVVTVVTFEFSSTDPRVDSGKWPKYTVFRIGSLFVSGREKSVYLYCRVNGTNKIQMKWGMEARRCLLQSMQQMEAIVEQESSIQGYDMTKACFKGDRVNSPKTFSIGTQEGKLVKGSFGKALRVIFTKCLMHYVFGNAQLEGFSAESRRLLLLIQALKDRKGPWVFDLEGMYSGIEECISNNPWVIQSAYWFNEWLGFEKEGSKVLESIDEIMDE.

Residues histidine 41, glutamate 81, aspartate 109, glutamate 120, and valine 121 each contribute to the Mn(2+) site. Residues 125-140 (KGLADDYFWKKKEKLG) carry the Nuclear localization signal 1 (NLS1) motif. The Nuclear localization signal 2 (NLS2) signature appears at 183–244 (LKNLWQVLIG…PKGAIERNLA (62 aa)).

It belongs to the influenza viruses PA family. Influenza RNA polymerase is composed of three subunits: PB1, PB2 and PA. Interacts (via C-terminus) with PB1 (via N-terminus). Mn(2+) serves as cofactor. Phosphorylated on serines and threonines by host kinases, including human casein kinase II.

It is found in the host cytoplasm. The protein localises to the host nucleus. Plays an essential role in viral RNA transcription and replication by forming the heterotrimeric polymerase complex together with PB1 and PB2 subunits. The complex transcribes viral mRNAs by using a unique mechanism called cap-snatching. It consists in the hijacking and cleavage of host capped pre-mRNAs. These short capped RNAs are then used as primers for viral mRNAs. The PB2 subunit is responsible for the binding of the 5' cap of cellular pre-mRNAs which are subsequently cleaved after 10-13 nucleotides by the PA subunit that carries the endonuclease activity. In Homo sapiens (Human), this protein is Polymerase acidic protein.